The following is a 78-amino-acid chain: uncharacterized protein (78 aa).

This is an uncharacterized protein from Ureaplasma parvum serovar 3 (strain ATCC 700970).